A 122-amino-acid chain; its full sequence is Small ribosomal subunit protein uS13 (122 aa).

The tract at residues 96-122 is disordered; sequence PVRGQRTRTNARTRKGPKKTVGVRRAK.

The protein belongs to the universal ribosomal protein uS13 family. Part of the 30S ribosomal subunit. Forms a loose heterodimer with protein S19. Forms two bridges to the 50S subunit in the 70S ribosome.

Functionally, located at the top of the head of the 30S subunit, it contacts several helices of the 16S rRNA. In the 70S ribosome it contacts the 23S rRNA (bridge B1a) and protein L5 of the 50S subunit (bridge B1b), connecting the 2 subunits; these bridges are implicated in subunit movement. Contacts the tRNAs in the A and P-sites. The protein is Small ribosomal subunit protein uS13 of Halothermothrix orenii (strain H 168 / OCM 544 / DSM 9562).